The chain runs to 323 residues: uncharacterized protein (323 aa).

This is an uncharacterized protein from Thermotoga maritima (strain ATCC 43589 / DSM 3109 / JCM 10099 / NBRC 100826 / MSB8).